A 167-amino-acid chain; its full sequence is Small ribosomal subunit protein uS5 (167 aa).

In terms of domain architecture, S5 DRBM spans 12–75 (LQEKLITVNR…EKARRNMVTI (64 aa)).

This sequence belongs to the universal ribosomal protein uS5 family. Part of the 30S ribosomal subunit. Contacts proteins S4 and S8.

With S4 and S12 plays an important role in translational accuracy. In terms of biological role, located at the back of the 30S subunit body where it stabilizes the conformation of the head with respect to the body. This chain is Small ribosomal subunit protein uS5, found in Buchnera aphidicola subsp. Schizaphis graminum (strain Sg).